Here is a 1053-residue protein sequence, read N- to C-terminus: Phosphoenolpyruvate carboxylase (1053 aa).

The active site involves histidine 246. The span at 461-473 (RNTRLQQQQEKDP) shows a compositional bias: basic and acidic residues. The disordered stretch occupies residues 461–480 (RNTRLQQQQEKDPTTPLPEY). Lysine 699 is a catalytic residue.

Belongs to the PEPCase type 1 family. The cofactor is Mg(2+).

It carries out the reaction oxaloacetate + phosphate = phosphoenolpyruvate + hydrogencarbonate. Functionally, forms oxaloacetate, a four-carbon dicarboxylic acid source for the tricarboxylic acid cycle. The sequence is that of Phosphoenolpyruvate carboxylase (ppc) from Synechococcus sp. (strain ATCC 27144 / PCC 6301 / SAUG 1402/1) (Anacystis nidulans).